Reading from the N-terminus, the 399-residue chain is Elongation factor Tu (399 aa).

Positions 10-204 constitute a tr-type G domain; the sequence is KPHVNIGTIG…AVDASIPEPE (195 aa). Residues 19-26 form a G1 region; that stretch reads GHVDHGKT. 19-26 contacts GTP; it reads GHVDHGKT. Thr-26 is a binding site for Mg(2+). A G2 region spans residues 60–64; sequence GITIN. A G3 region spans residues 81 to 84; sequence DCPG. GTP contacts are provided by residues 81 to 85 and 136 to 139; these read DCPGH and NKCD. The interval 136-139 is G4; that stretch reads NKCD. Residues 174–176 are G5; the sequence is SGL.

This sequence belongs to the TRAFAC class translation factor GTPase superfamily. Classic translation factor GTPase family. EF-Tu/EF-1A subfamily. In terms of assembly, monomer.

Its subcellular location is the cytoplasm. It catalyses the reaction GTP + H2O = GDP + phosphate + H(+). Functionally, GTP hydrolase that promotes the GTP-dependent binding of aminoacyl-tRNA to the A-site of ribosomes during protein biosynthesis. This Prochlorococcus marinus (strain MIT 9515) protein is Elongation factor Tu.